The chain runs to 187 residues: UPF0301 protein YqgE (187 aa).

The protein belongs to the UPF0301 (AlgH) family.

This is UPF0301 protein YqgE from Escherichia coli O127:H6 (strain E2348/69 / EPEC).